A 738-amino-acid chain; its full sequence is Multifunctional procollagen lysine hydroxylase and glycosyltransferase LH3 (738 aa).

The N-terminal stretch at 1-24 (MTSSGPGPRFLLLLPLLLPPAASA) is a signal peptide. The interval 25-290 (SDRPRGRDPV…FCNQDRRTLP (266 aa)) is required for glycosyltransferase activity. Residue 44–46 (VAT) participates in UDP binding. Asn63 carries N-linked (GlcNAc...) asparagine glycosylation. Residues Asp112, Asp115, and His253 each contribute to the Mn(2+) site. 112 to 114 (DSY) contributes to the UDP binding site. Residue 256-259 (GPTK) participates in UDP binding. 2 disulfide bridges follow: Cys279/Cys282 and Cys379/Cys385. Residues 295–520 (PPRVFLAVFV…EFGRLLATSR (226 aa)) are accessory region. N-linked (GlcNAc...) asparagine glycosylation occurs at Asn548. Cys563 and Cys698 are joined by a disulfide. 2-oxoglutarate contacts are provided by Arg599 and Tyr656. A Fe2OG dioxygenase domain is found at 647–738 (RAVMNFVVRY…RYIMVSFVDP (92 aa)). Fe cation-binding residues include His667 and Asp669. Positions 672–715 (TFTLNVALNHKGLDYEGGGCRFLRYDCVISSPRKGWALLHPGRL) are important for dimerization. Asn676 serves as a coordination point for 2-oxoglutarate. His719 contacts Fe cation. Residue Arg729 participates in 2-oxoglutarate binding.

Homodimer. Fe(2+) is required as a cofactor. The cofactor is L-ascorbate. Requires Mn(2+) as cofactor.

Its subcellular location is the rough endoplasmic reticulum. It localises to the endoplasmic reticulum lumen. It is found in the endoplasmic reticulum membrane. The protein localises to the secreted. The protein resides in the extracellular space. The enzyme catalyses L-lysyl-[collagen] + 2-oxoglutarate + O2 = (5R)-5-hydroxy-L-lysyl-[collagen] + succinate + CO2. It carries out the reaction (5R)-5-hydroxy-L-lysyl-[collagen] + UDP-alpha-D-galactose = (5R)-5-O-(beta-D-galactosyl)-5-hydroxy-L-lysyl-[collagen] + UDP + H(+). The catalysed reaction is (5R)-5-O-(beta-D-galactosyl)-5-hydroxy-L-lysyl-[collagen] + UDP-alpha-D-glucose = (5R)-5-O-[alpha-D-glucosyl-(1-&gt;2)-beta-D-galactosyl]-5-hydroxy-L-lysyl-[collagen] + UDP + H(+). Functionally, multifunctional enzyme that catalyzes a series of post-translational modifications on Lys residues in procollagen. Plays a redundant role in catalyzing the formation of hydroxylysine residues in -Xaa-Lys-Gly- sequences in collagens. Plays a redundant role in catalyzing the transfer of galactose onto hydroxylysine groups, giving rise to galactosyl 5-hydroxylysine. Has an essential role by catalyzing the subsequent transfer of glucose moieties, giving rise to 1,2-glucosylgalactosyl-5-hydroxylysine residues. Catalyzes hydroxylation and glycosylation of Lys residues in the MBL1 collagen-like domain, giving rise to hydroxylysine and 1,2-glucosylgalactosyl-5-hydroxylysine residues. Catalyzes hydroxylation and glycosylation of Lys residues in the ADIPOQ collagen-like domain, giving rise to hydroxylysine and 1,2-glucosylgalactosyl-5-hydroxylysine residues. Essential for normal biosynthesis and secretion of type IV collagens. Essential for normal formation of basement membranes. The chain is Multifunctional procollagen lysine hydroxylase and glycosyltransferase LH3 (PLOD3) from Pongo abelii (Sumatran orangutan).